The sequence spans 334 residues: uncharacterized protein (334 aa).

Serine 126 is a binding site for substrate. Tyrosine 151 acts as the Proton acceptor in catalysis.

It belongs to the NAD(P)-dependent epimerase/dehydratase family. dTDP-glucose dehydratase subfamily.

This is an uncharacterized protein from Escherichia coli O111:H-.